The sequence spans 220 residues: CRISPR system Cms endoribonuclease Csm3 (220 aa).

This sequence belongs to the CRISPR-associated Csm3 family. Part of the Csm effector complex that includes at least Cas10(1), Csm2(3), Csm3(5), Csm4(1), Csm5(1) and mature crRNA. The Csm complex is elongated and slightly twisted with a maximal length of 215 Angstroms and a diameter of 75-80 Angstroms. It has been modeled to have a central protein filamant of Csm3 subunits along which the dsRNA helix of paired crRNA and target RNA binds. The filament is capped at one end by Cas10 and Csm4 and at the other end by Csm5; ssDNA is thought to bind to the N-terminal HD domain of Cas10. Csm with a precursor crRNA does not include Csm5, while Cas6, the enzyme probably involved in pre-crRNA processing, is found associated with a subset of the Csm complex. A metal cation serves as cofactor.

Its activity is regulated as follows. Target ssRNase is inhibited by EDTA. Functionally, CRISPR (clustered regularly interspaced short palindromic repeat) is an adaptive immune system that provides protection against mobile genetic elements (viruses, transposable elements and conjugative plasmids). CRISPR clusters contain spacers, sequences complementary to antecedent mobile elements, and target invading nucleic acids. CRISPR clusters are transcribed and processed into CRISPR RNA (crRNA). The type III-A Csm effector complex binds crRNA and acts as a crRNA-guided RNase, DNase and cyclic oligoadenylate synthase; binding of target RNA cognate to the crRNA is required for all activities. In a heterologous host this Csm effector complex restricts ssRNA phage MS2, suggesting it may target RNA viruses in vivo. Its function is as follows. Csm functions as a non-specific ssDNase. Base-pairing between crRNA and target RNA to form a ternary Csm complex activates a ssDNase activity; target RNA cleavage suppresses the ssDNase, a temporal control that prevents uncontrolled DNA degradation. Viral RNA transcripts probably tether the Csm complex to the viral genome, recruiting Cas10 ssDNA activity which is able to degrade DNA in the transcription bubble, spatially controlling the DNase activity. In terms of biological role, this subunit has the target ssRNA endonuclease activity; it cleaves multiple sites in the target RNA at 6 nucleotide intervals. The number of cleavage sites in the target RNA correlates with the number of Csm3 subunits in the Csm effector complex. In the Csm complex target RNA and ssDNA are cleaved simultaneously, although RNase activity (of Csm3) is much faster. RNA cleavage by Csm3 is not required for ssDNase activity as Csm complex with inactive Csm3 still has ssDNase activity; however as the cleaved target RNA products dissociate away ssDNase activity decreases. The protein is CRISPR system Cms endoribonuclease Csm3 of Streptococcus thermophilus.